The chain runs to 569 residues: Oxygen-dependent choline dehydrogenase (569 aa).

An FAD-binding site is contributed by 9–38 (DYVIIGGGSAGSVLGNRLSEDKDKEVLVLE). The active-site Proton acceptor is histidine 475.

This sequence belongs to the GMC oxidoreductase family. It depends on FAD as a cofactor.

The enzyme catalyses choline + A = betaine aldehyde + AH2. It carries out the reaction betaine aldehyde + NAD(+) + H2O = glycine betaine + NADH + 2 H(+). It participates in amine and polyamine biosynthesis; betaine biosynthesis via choline pathway; betaine aldehyde from choline (cytochrome c reductase route): step 1/1. In terms of biological role, involved in the biosynthesis of the osmoprotectant glycine betaine. Catalyzes the oxidation of choline to betaine aldehyde and betaine aldehyde to glycine betaine at the same rate. This Staphylococcus aureus (strain COL) protein is Oxygen-dependent choline dehydrogenase.